Reading from the N-terminus, the 815-residue chain is MKFTLSWLKQFLEISASVTEIAEALTDIGLEVEEVIDKSKELQKFEVAYIRNIKPHPSADKLKLCDVETKNGILQIVCGASNVRADIKVVLANIGIEIPKGNLKIKESVIRGQKSYGMLCSEEELLLSSNSDGIIELPKDAVVGDNFTKYYGLDDPIFVINVTPNRGDVLGVYGIARDLSAKGLGTLKELELSEIKSTFFSKIKLNVHDKEACPLFTFREIRNLKNKPSPNWLQQLLKNVGIKTISSLVDVTNYISHSFGQPIHAYDADKIYGGISVDCYIRSDKVISCKNHEMATAVLQFSNDSANFYAINGKGYLLTENDLAIKDESGIQGLAGIIGGAKSSCNDSTTNVILEAACFNAKMVAASGRRLKIDTDARYRNERNIDRNFTEKALNIATNLILSICGNCEVSEVVKVGEQEPQKKPLDFSVYFLEKITGIKLSIQEIEDILNKLGFITDVKGDIIKVIAPSWRHDINILEDIAEEIVRIYGYDKIESIKLPELYQNNNLREYKRISSFKRILASKGYDEVVTNSFMSSEDAKLFAELKEGLFLLNPMSIEENYMRPTVLPNLISIVSKNLARDVKDMAFFEVGPSFVNLNIESTYLTAIISGAFNNKNPHSFGRNYDIFDIKGDLEQVIEYAGLSLDKCIVIDETVLPQYYHPTRAINIRLGKNLLGHFGQIHPKILKYYDINQEIFAFELNITNLPLIKAKFGKRDEFTVSDYQANFRDYSFIVDQDHKVGEIISYIKNFNKKLVKSVMLFDIYSGDKLPEGKKSIAIKIKLQADDRTLSETDLNSFSEDLVASISQKFQGILRE.

Residues 39–148 (SKELQKFEVA…KDAVVGDNFT (110 aa)) form the tRNA-binding domain. In terms of domain architecture, B5 spans 421–496 (PQKKPLDFSV…RIYGYDKIES (76 aa)). Mg(2+) contacts are provided by aspartate 474, aspartate 480, glutamate 483, and glutamate 484. One can recognise an FDX-ACB domain in the interval 721–814 (SDYQANFRDY…ISQKFQGILR (94 aa)).

It belongs to the phenylalanyl-tRNA synthetase beta subunit family. Type 1 subfamily. As to quaternary structure, tetramer of two alpha and two beta subunits. The cofactor is Mg(2+).

Its subcellular location is the cytoplasm. It catalyses the reaction tRNA(Phe) + L-phenylalanine + ATP = L-phenylalanyl-tRNA(Phe) + AMP + diphosphate + H(+). The chain is Phenylalanine--tRNA ligase beta subunit (pheT) from Rickettsia prowazekii (strain Madrid E).